Reading from the N-terminus, the 62-residue chain is Synergistic-type venom protein C8S2, chain 2 (62 aa).

Disulfide bonds link cysteine 3–cysteine 24, cysteine 17–cysteine 42, and cysteine 46–cysteine 57.

This sequence belongs to the three-finger toxin family. Short-chain subfamily. Aminergic toxin sub-subfamily. Heterodimer of C8S2 chain 1 (AC P01410) and chain 2; disulfide-linked. Expressed by the venom gland.

Its subcellular location is the secreted. This protein shows a synergetic toxic effect in that it enhances the toxicity of other toxins. The sequence is that of Synergistic-type venom protein C8S2, chain 2 from Dendroaspis angusticeps (Eastern green mamba).